Consider the following 204-residue polypeptide: Holliday junction branch migration complex subunit RuvA (204 aa).

Residues 1 to 64 (MIGHLTGRLV…EDAHLLFGFS (64 aa)) form a domain I region. Residues 65–143 (QKTDRTLFRE…GIQQEDFFIE (79 aa)) form a domain II region. The flexible linker stretch occupies residues 144-155 (SQHLKQPEHALN). Residues 156 to 204 (EQDIPASEAISALIALGYKAAEAEKLVKKISKPALSSEQLIREALKAAL) form a domain III region.

This sequence belongs to the RuvA family. As to quaternary structure, homotetramer. Forms an RuvA(8)-RuvB(12)-Holliday junction (HJ) complex. HJ DNA is sandwiched between 2 RuvA tetramers; dsDNA enters through RuvA and exits via RuvB. An RuvB hexamer assembles on each DNA strand where it exits the tetramer. Each RuvB hexamer is contacted by two RuvA subunits (via domain III) on 2 adjacent RuvB subunits; this complex drives branch migration. In the full resolvosome a probable DNA-RuvA(4)-RuvB(12)-RuvC(2) complex forms which resolves the HJ.

It is found in the cytoplasm. Its function is as follows. The RuvA-RuvB-RuvC complex processes Holliday junction (HJ) DNA during genetic recombination and DNA repair, while the RuvA-RuvB complex plays an important role in the rescue of blocked DNA replication forks via replication fork reversal (RFR). RuvA specifically binds to HJ cruciform DNA, conferring on it an open structure. The RuvB hexamer acts as an ATP-dependent pump, pulling dsDNA into and through the RuvAB complex. HJ branch migration allows RuvC to scan DNA until it finds its consensus sequence, where it cleaves and resolves the cruciform DNA. This Pasteurella multocida (strain Pm70) protein is Holliday junction branch migration complex subunit RuvA.